A 298-amino-acid polypeptide reads, in one-letter code: Acetylglutamate kinase (298 aa).

Residues 69 to 70, Arg-91, and Asn-196 contribute to the substrate site; that span reads GG.

The protein belongs to the acetylglutamate kinase family. ArgB subfamily.

It is found in the cytoplasm. It catalyses the reaction N-acetyl-L-glutamate + ATP = N-acetyl-L-glutamyl 5-phosphate + ADP. The protein operates within amino-acid biosynthesis; L-arginine biosynthesis; N(2)-acetyl-L-ornithine from L-glutamate: step 2/4. Functionally, catalyzes the ATP-dependent phosphorylation of N-acetyl-L-glutamate. This Rhodopseudomonas palustris (strain BisA53) protein is Acetylglutamate kinase.